A 473-amino-acid chain; its full sequence is Arginine biosynthesis bifunctional protein ArgJ, mitochondrial (473 aa).

Residues T201, K230, T241, E328, N468, and T473 each contribute to the substrate site. The active-site Nucleophile is the T241.

This sequence belongs to the ArgJ family. As to quaternary structure, heterodimer of an alpha and a beta chain. In terms of processing, the alpha and beta chains are autoproteolytically processed from a single precursor protein within the mitochondrion.

Its subcellular location is the mitochondrion matrix. The catalysed reaction is N(2)-acetyl-L-ornithine + L-glutamate = N-acetyl-L-glutamate + L-ornithine. It catalyses the reaction L-glutamate + acetyl-CoA = N-acetyl-L-glutamate + CoA + H(+). Its pathway is amino-acid biosynthesis; L-arginine biosynthesis; L-ornithine and N-acetyl-L-glutamate from L-glutamate and N(2)-acetyl-L-ornithine (cyclic): step 1/1. It functions in the pathway amino-acid biosynthesis; L-arginine biosynthesis; N(2)-acetyl-L-ornithine from L-glutamate: step 1/4. Catalyzes two activities which are involved in the cyclic version of arginine biosynthesis: the synthesis of acetylglutamate from glutamate and acetyl-CoA, and of ornithine by transacetylation between acetylornithine and glutamate. The polypeptide is Arginine biosynthesis bifunctional protein ArgJ, mitochondrial (Ajellomyces capsulatus (strain G186AR / H82 / ATCC MYA-2454 / RMSCC 2432) (Darling's disease fungus)).